Consider the following 373-residue polypeptide: uncharacterized protein (373 aa).

The region spanning 14–168 (KKIVNKIIDE…LMDTPGVLEM (155 aa)) is the CP-type G domain. Residue 117 to 124 (GYPNVGKS) participates in GTP binding.

This sequence belongs to the TRAFAC class YlqF/YawG GTPase family.

This is an uncharacterized protein from Methanocaldococcus jannaschii (strain ATCC 43067 / DSM 2661 / JAL-1 / JCM 10045 / NBRC 100440) (Methanococcus jannaschii).